The primary structure comprises 458 residues: tRNA(Ile)-lysidine synthase (458 aa).

ATP is bound at residue 36-41 (SGGADS).

Belongs to the tRNA(Ile)-lysidine synthase family.

It is found in the cytoplasm. The catalysed reaction is cytidine(34) in tRNA(Ile2) + L-lysine + ATP = lysidine(34) in tRNA(Ile2) + AMP + diphosphate + H(+). In terms of biological role, ligates lysine onto the cytidine present at position 34 of the AUA codon-specific tRNA(Ile) that contains the anticodon CAU, in an ATP-dependent manner. Cytidine is converted to lysidine, thus changing the amino acid specificity of the tRNA from methionine to isoleucine. This is tRNA(Ile)-lysidine synthase from Protochlamydia amoebophila (strain UWE25).